The primary structure comprises 458 residues: Flavonol 3-O-glucosyltransferase F3GT2 (458 aa).

The Proton acceptor role is filled by H20. H20 lines the an anthocyanidin pocket. D119 acts as the Charge relay in catalysis. Residue T141 coordinates UDP-alpha-D-glucose. H150 lines the an anthocyanidin pocket. UDP-alpha-D-glucose contacts are provided by A333, Q335, H350, W353, N354, S355, and E358. G373 contributes to the an anthocyanidin binding site. D374 and Q375 together coordinate UDP-alpha-D-glucose.

The protein belongs to the UDP-glycosyltransferase family. As to expression, expressed in ovaries.

The catalysed reaction is a flavonol + UDP-alpha-D-glucose = a flavonol 3-O-beta-D-glucoside + UDP + H(+). It functions in the pathway flavonoid metabolism. In terms of biological role, catalyzes the glucosylation of quercetin. Preferentially uses UDP-glucose as sugar donor, but is also able to use UDP-gal and UDP-xyl. Is probably not required for the accumulation of anthocyanin in red-fleshed kiwifruit varieties. This chain is Flavonol 3-O-glucosyltransferase F3GT2, found in Actinidia chinensis var. chinensis (Chinese soft-hair kiwi).